A 186-amino-acid polypeptide reads, in one-letter code: uncharacterized protein (186 aa).

Transmembrane regions (helical) follow at residues 5-25 (LIAC…FEDI), 39-59 (IITI…KLFA), 62-82 (NLLF…ILLF), and 122-142 (GFFE…IALM).

The protein resides in the cell membrane. This is an uncharacterized protein from Borreliella burgdorferi (strain ATCC 35210 / DSM 4680 / CIP 102532 / B31) (Borrelia burgdorferi).